The chain runs to 92 residues: Small ribosomal subunit protein bS20 (92 aa).

The tract at residues 1–23 (MANTTSAKKATRKIARRTDVNKA) is disordered.

Belongs to the bacterial ribosomal protein bS20 family.

Binds directly to 16S ribosomal RNA. This Rhizobium etli (strain CIAT 652) protein is Small ribosomal subunit protein bS20.